We begin with the raw amino-acid sequence, 222 residues long: 3-dehydroquinate dehydratase (222 aa).

3-dehydroquinate contacts are provided by residues 29-31 and Arg55; that span reads ELR. His112 acts as the Proton donor/acceptor in catalysis. The active-site Schiff-base intermediate with substrate is the Lys139. 3-dehydroquinate-binding residues include Arg178, Ser199, and Gln203.

This sequence belongs to the type-I 3-dehydroquinase family. In terms of assembly, homodimer.

The catalysed reaction is 3-dehydroquinate = 3-dehydroshikimate + H2O. The protein operates within metabolic intermediate biosynthesis; chorismate biosynthesis; chorismate from D-erythrose 4-phosphate and phosphoenolpyruvate: step 3/7. Its function is as follows. Involved in the third step of the chorismate pathway, which leads to the biosynthesis of aromatic amino acids. Catalyzes the cis-dehydration of 3-dehydroquinate (DHQ) and introduces the first double bond of the aromatic ring to yield 3-dehydroshikimate. The protein is 3-dehydroquinate dehydratase of Dehalococcoides mccartyi (strain ATCC BAA-2100 / JCM 16839 / KCTC 5957 / BAV1).